A 661-amino-acid chain; its full sequence is DNA ligase (661 aa).

NAD(+) is bound by residues 31–35, 80–81, and Glu109; these read DSGYD and SL. Residue Lys111 is the N6-AMP-lysine intermediate of the active site. NAD(+) contacts are provided by Arg132, Glu167, Lys283, and Lys307. Residues Cys401, Cys404, Cys419, and Cys424 each coordinate Zn(2+). Residues 582–661 form the BRCT domain; the sequence is AGEQLLQGKT…AGFLNLLGLS (80 aa).

Belongs to the NAD-dependent DNA ligase family. LigA subfamily. The cofactor is Mg(2+). Requires Mn(2+) as cofactor.

The enzyme catalyses NAD(+) + (deoxyribonucleotide)n-3'-hydroxyl + 5'-phospho-(deoxyribonucleotide)m = (deoxyribonucleotide)n+m + AMP + beta-nicotinamide D-nucleotide.. Functionally, DNA ligase that catalyzes the formation of phosphodiester linkages between 5'-phosphoryl and 3'-hydroxyl groups in double-stranded DNA using NAD as a coenzyme and as the energy source for the reaction. It is essential for DNA replication and repair of damaged DNA. In Syntrophomonas wolfei subsp. wolfei (strain DSM 2245B / Goettingen), this protein is DNA ligase.